The chain runs to 638 residues: Growth hormone receptor (638 aa).

An N-terminal signal peptide occupies residues 1–18 (MDLWQLLLTLALAGSSDA). The Extracellular portion of the chain corresponds to 19–264 (FSGSEATAAI…SQFTCEEDFY (246 aa)). N-linked (GlcNAc...) asparagine glycosylation is present at Asn-46. 2 disulfides stabilise this stretch: Cys-56–Cys-66 and Cys-101–Cys-112. Asn-115 carries N-linked (GlcNAc...) asparagine glycosylation. A disulfide bond links Cys-126 and Cys-140. Residues 151 to 254 (PPIALNWTLL…EVLYVTLPQM (104 aa)) enclose the Fibronectin type-III domain. 3 N-linked (GlcNAc...) asparagine glycosylation sites follow: Asn-156, Asn-161, and Asn-200. A WSXWS motif motif is present at residues 240–244 (YGEFS). Residues 260-262 (EED) form a required for ADAM17-mediated proteolysis region. A helical membrane pass occupies residues 265–288 (FPWLLIIIFGIFGLTVMLFVFLFS). Residues 289–638 (KQQRIKMLIL…STDQLNKIMP (350 aa)) lie on the Cytoplasmic side of the membrane. The tract at residues 294-379 (KMLILPPVPV…HEKSHSNLGV (86 aa)) is required for JAK2 binding. The Box 1 motif signature appears at 297–305 (ILPPVPVPK). The UbE motif motif lies at 340 to 349 (DSWVEFIELD). The residue at position 341 (Ser-341) is a Phosphoserine. The tract at residues 353–391 (PDEKTEESDTDRLLSSDHEKSHSNLGVKDGDSGRTSCCE) is disordered. The span at 362 to 384 (TDRLLSSDHEKSHSNLGVKDGDS) shows a compositional bias: basic and acidic residues. Tyr-487 and Tyr-595 each carry phosphotyrosine; by JAK2.

It belongs to the type I cytokine receptor family. Type 1 subfamily. As to quaternary structure, on growth hormone (GH) binding, forms homodimers and binds JAK2 via a box 1-containing domain. In terms of processing, the soluble form (GHBP) is produced by phorbol ester-promoted proteolytic cleavage at the cell surface (shedding) by ADAM17/TACE. Shedding is inhibited by growth hormone (GH) binding to the receptor probably due to a conformational change in GHR rendering the receptor inaccessible to ADAM17. On GH binding, phosphorylated on tyrosine residues in the cytoplasmic domain by JAK2. Post-translationally, ubiquitinated by the ECS(SOCS2) complex following ligand-binding and phosphorylation by JAK2, leading to its degradation by the proteasome. Regulation by the ECS(SOCS2) complex acts as a negative feedback loop of growth hormone receptor signaling. Ubiquitination is not sufficient for GHR internalization. Expressed in various tissues with high expression in liver and skeletal muscle. In terms of tissue distribution, isoform 2 is expressed in lung, stomach and muscle. As to expression, predominantly expressed in kidney, bladder, adrenal gland and brain stem. Highly expressed in placental villi.

The protein resides in the cell membrane. Its subcellular location is the secreted. Functionally, receptor for pituitary gland growth hormone (GH1) involved in regulating postnatal body growth. On ligand binding, couples to the JAK2/STAT5 pathway. The soluble form (GHBP) acts as a reservoir of growth hormone in plasma and may be a modulator/inhibitor of GH signaling. In terms of biological role, up-regulates the production of the soluble Growth hormone-binding protein form (GHBP) and acts as a negative inhibitor of growth hormone signaling. The protein is Growth hormone receptor (GHR) of Homo sapiens (Human).